A 127-amino-acid chain; its full sequence is Large ribosomal subunit protein bL12 (127 aa).

The protein belongs to the bacterial ribosomal protein bL12 family. Homodimer. Part of the ribosomal stalk of the 50S ribosomal subunit. Forms a multimeric L10(L12)X complex, where L10 forms an elongated spine to which 2 to 4 L12 dimers bind in a sequential fashion. Binds GTP-bound translation factors.

Functionally, forms part of the ribosomal stalk which helps the ribosome interact with GTP-bound translation factors. Is thus essential for accurate translation. The chain is Large ribosomal subunit protein bL12 from Rhizobium etli (strain CIAT 652).